We begin with the raw amino-acid sequence, 426 residues long: Proline--tRNA ligase (426 aa).

It belongs to the class-II aminoacyl-tRNA synthetase family. ProS type 2 subfamily. In terms of assembly, homodimer.

The protein localises to the cytoplasm. The catalysed reaction is tRNA(Pro) + L-proline + ATP = L-prolyl-tRNA(Pro) + AMP + diphosphate. Its function is as follows. Catalyzes the attachment of proline to tRNA(Pro) in a two-step reaction: proline is first activated by ATP to form Pro-AMP and then transferred to the acceptor end of tRNA(Pro). The sequence is that of Proline--tRNA ligase from Rickettsia africae (strain ESF-5).